The primary structure comprises 488 residues: 3-octaprenyl-4-hydroxybenzoate carboxy-lyase (488 aa).

Mn(2+) is bound at residue Asn172. Prenylated FMN contacts are provided by residues 175-177 (IYR), 189-191 (RWL), and 194-195 (RG). Glu238 contributes to the Mn(2+) binding site. The active-site Proton donor is Asp287.

Belongs to the UbiD family. As to quaternary structure, homohexamer. The cofactor is prenylated FMN. Mn(2+) is required as a cofactor.

The protein localises to the cell membrane. It carries out the reaction a 4-hydroxy-3-(all-trans-polyprenyl)benzoate + H(+) = a 2-(all-trans-polyprenyl)phenol + CO2. It participates in cofactor biosynthesis; ubiquinone biosynthesis. In terms of biological role, catalyzes the decarboxylation of 3-octaprenyl-4-hydroxy benzoate to 2-octaprenylphenol, an intermediate step in ubiquinone biosynthesis. The chain is 3-octaprenyl-4-hydroxybenzoate carboxy-lyase from Legionella pneumophila (strain Corby).